The sequence spans 289 residues: ATP synthase gamma chain (289 aa).

This sequence belongs to the ATPase gamma chain family. As to quaternary structure, F-type ATPases have 2 components, CF(1) - the catalytic core - and CF(0) - the membrane proton channel. CF(1) has five subunits: alpha(3), beta(3), gamma(1), delta(1), epsilon(1). CF(0) has three main subunits: a, b and c.

It localises to the cell membrane. Produces ATP from ADP in the presence of a proton gradient across the membrane. The gamma chain is believed to be important in regulating ATPase activity and the flow of protons through the CF(0) complex. This is ATP synthase gamma chain from Lawsonia intracellularis (strain PHE/MN1-00).